A 543-amino-acid polypeptide reads, in one-letter code: Probable zinc transporter protein DDB_G0283629 (543 aa).

Residues 1-175 are disordered; it reads MENFKNNELE…EESKPLNQLR (175 aa). At 1–186 the chain is on the cytoplasmic side; it reads MENFKNNELE…LDSKKKARYS (186 aa). Composition is skewed to low complexity over residues 11 to 26 and 41 to 55; these read SSPIINKNNSSHSINN and NNNNDNNNTITNSHI. 2 stretches are compositionally biased toward basic and acidic residues: residues 56–66 and 76–104; these read NNHDHKHNHEH and HNHDHDHNHEEEYGHGNELEHNNDQEHNV. Residues 105–116 are compositionally biased toward low complexity; the sequence is GNKNLLTNNNNQ. The span at 130–140 shows a compositional bias: gly residues; the sequence is EDGSSSGGGGG. A helical membrane pass occupies residues 187-207; that stretch reads LILALTLTTIFMVGEIVGGYF. Over 208–216 the chain is Extracellular; that stretch reads ANSLAIMTD. A helical membrane pass occupies residues 217–237; it reads AAHLLTDIGAMFLSLFAMWIS. Residues 238–251 lie on the Cytoplasmic side of the membrane; it reads QHPPTSSMSFGFHR. Residues 252–272 traverse the membrane as a helical segment; sequence AEILGALVSVLMIWALTGVLV. Residues 273-289 lie on the Extracellular side of the membrane; that stretch reads YEAIQRILYPPDAVDGK. The helical transmembrane segment at 290–310 threads the bilayer; that stretch reads IMFIIASCGLFINIIDAIILH. Topologically, residues 311–375 are cytoplasmic; sequence WGSGGHGHSH…VRNINVHSAY (65 aa). Residues 319-342 are disordered; the sequence is SHGGGHGHSHGIGGGTQKKKSKKN. The chain crosses the membrane as a helical span at residues 376–396; it reads IHVLGDCFQSIGVMVASCIIW. At 397 to 402 the chain is on the extracellular side; sequence VHPHWK. Residues 403–423 form a helical membrane-spanning segment; the sequence is IADPITTLIFSVIVLGTTIKL. The Cytoplasmic segment spans residues 424–543; it reads LRESLGVLME…NDNLSSPPNQ (120 aa). The tract at residues 516–543 is disordered; it reads KCKDHSCPPPKPKKKKIKNDNLSSPPNQ.

The protein belongs to the cation diffusion facilitator (CDF) transporter (TC 2.A.4) family. SLC30A subfamily.

The protein resides in the membrane. Its function is as follows. May be involved in zinc transport from the cytoplasm to either intracellular organelles or extracellular spaces. The sequence is that of Probable zinc transporter protein DDB_G0283629 from Dictyostelium discoideum (Social amoeba).